Consider the following 775-residue polypeptide: Homeobox protein SIX4 (775 aa).

A compositionally biased stretch (polar residues) spans 1–10 (MSSSSPTGQI). Disordered regions lie at residues 1–76 (MSSS…AGAA) and 263–313 (WFKN…DGVT). Ser-2 bears the N-acetylserine mark. Residues 54–63 (EPGDAAAASR) are compositionally biased toward low complexity. A DNA-binding region (homeobox) is located at residues 216–275 (GEETVYCFKEKSRNALKELYKQNRYPSPAEKRHLAKITGLSLTQVSNWFKNRRQRDRNPS). 2 stretches are compositionally biased toward basic and acidic residues: residues 271–283 (DRNPSETQSKSES) and 292–301 (ESSKGHEDLS). Residues 582–775 (AQVNASLSSE…VQLDEDMQDL (194 aa)) are transactivation domain. Ser-634 carries the phosphoserine modification.

It belongs to the SIX/Sine oculis homeobox family. As to quaternary structure, interacts with EYA3; acts cooperatively with EYA3 to transactivate target genes through interaction and nuclear translocation of EYA3 protein. In terms of tissue distribution, mainly expressed in the skeletal muscle (isoform 1 and isoform 2 but not isoform 3), and weakly in the heart. Also found in the retina and the distal tube of kidney. Expressed in skeletal muscle, nasal epithelium, cochlea, parathyroid and salivary gland. Expressed in muscle satellite cells of normal and regenerating muscles.

Its subcellular location is the nucleus. It is found in the cytoplasm. In terms of biological role, transcriptional regulator which can act as both a transcriptional repressor and activator by binding a DNA sequence on these target genes and is involved in processes like cell differentiation, cell migration and cell survival. Transactivates gene expression by binding a 5'-[CAT]A[CT][CT][CTG]GA[GAT]-3' motif present in the Trex site and from a 5'-TCA[AG][AG]TTNC-3' motif present in the MEF3 site of the muscle-specific genes enhancer. Acts cooperatively with EYA proteins to transactivate their target genes through interaction and nuclear translocation of EYA protein. Acts synergistically with SIX1 to regulate target genes involved in formation of various organs, including muscle, kidney, gonad, ganglia, olfactory epithelium and cranial skeleton. Plays a role in several important steps of muscle development. Controls the genesis of hypaxial myogenic progenitors in the dermomyotome by transactivating PAX3 and the delamination and migration of the hypaxial precursors from the ventral lip to the limb buds through the transactivation of PAX3, MET and LBX1. Controls myoblast determination by transactivating MYF5, MYOD1 and MYF6. Controls somitic differentiation in myocyte through MYOG transactivation. Plays a role in synaptogenesis and sarcomere organization by participating in myofiber specialization during embryogenesis by activating fast muscle program in the primary myotome resulting in an up-regulation of fast muscle genes, including ATP2A1, MYL1 and TNNT3. Simultaneously, is also able to activate inhibitors of slow muscle genes, such as SOX6, HRASLS, and HDAC4, thereby restricting the activation of the slow muscle genes. During muscle regeneration, negatively regulates differentiation of muscle satellite cells through down-regulation of MYOG expression. During kidney development regulates the early stages of metanephros development and ureteric bud formation through regulation of GDNF, SALL1, PAX8 and PAX2 expression. Plays a role in gonad development by regulating both testis determination and size determination. In gonadal sex determination, transactivates ZFPM2 by binding a MEF3 consensus sequence, resulting in SRY up-regulation. In gonadal size determination, transactivates NR5A1 by binding a MEF3 consensus sequence resulting in gonadal precursor cell formation regulation. During olfactory development mediates the specification and patterning of olfactory placode through fibroblast growth factor and BMP4 signaling pathways and also regulates epithelial cell proliferation during placode formation. Promotes survival of sensory neurons during early trigeminal gangliogenesis. In the developing dorsal root ganglia, up-regulates SLC12A2 transcription. Regulates early thymus/parathyroid organogenesis through regulation of GCM2 and FOXN1 expression. Forms gustatory papillae during development of the tongue. Also plays a role during embryonic cranial skeleton morphogenesis. The polypeptide is Homeobox protein SIX4 (Six4) (Mus musculus (Mouse)).